Consider the following 498-residue polypeptide: ATP synthase subunit beta, chloroplastic (498 aa).

At T6 the chain carries Phosphothreonine. S13 carries the phosphoserine modification. An ATP-binding site is contributed by 172–179 (GGAGVGKT).

It belongs to the ATPase alpha/beta chains family. In terms of assembly, F-type ATPases have 2 components, CF(1) - the catalytic core - and CF(0) - the membrane proton channel. CF(1) has five subunits: alpha(3), beta(3), gamma(1), delta(1), epsilon(1). CF(0) has four main subunits: a(1), b(1), b'(1) and c(9-12).

It is found in the plastid. The protein localises to the chloroplast thylakoid membrane. It catalyses the reaction ATP + H2O + 4 H(+)(in) = ADP + phosphate + 5 H(+)(out). Functionally, produces ATP from ADP in the presence of a proton gradient across the membrane. The catalytic sites are hosted primarily by the beta subunits. The protein is ATP synthase subunit beta, chloroplastic of Capsella bursa-pastoris (Shepherd's purse).